A 661-amino-acid polypeptide reads, in one-letter code: Pumilio domain-containing protein C56F2.08c (661 aa).

Positions 1-74 (MLYVSNLPVG…GPVQVMLAKP (74 aa)) constitute an RRM domain. The residue at position 102 (serine 102) is a Phosphoserine. Phosphothreonine is present on threonine 104. Phosphoserine is present on serine 105. Residues 129–482 (INLDIVDSMI…RLMEEVGMTS (354 aa)) form the PUM-HD domain. Pumilio repeat units lie at residues 191–226 (SMLDDVAELSSDYLGNTVVQKFFEYCSDPIKEAMLE), 227–263 (RIAPYLAAIGIHKNGTWAAQKIIDVASTEKQMDLIVK), 264–302 (HLRPYTALLYFDQFGNYVAQCCLRFKYPKNTFLFEVMAR), and 374–410 (HLATHLHTTCTHKLASTLIFKLINNKQEPESRNLLLK). Phosphoserine is present on residues serine 482, serine 486, serine 488, and serine 490.

The protein localises to the cytoplasm. The sequence is that of Pumilio domain-containing protein C56F2.08c from Schizosaccharomyces pombe (strain 972 / ATCC 24843) (Fission yeast).